Reading from the N-terminus, the 625-residue chain is tRNA uridine 5-carboxymethylaminomethyl modification enzyme MnmG (625 aa).

FAD contacts are provided by residues 13 to 18 (GGGHAG), Val-125, and Ser-182. Residue 276-290 (GPRYCPSIEDKITRF) coordinates NAD(+). Gln-373 serves as a coordination point for FAD.

It belongs to the MnmG family. In terms of assembly, homodimer. Heterotetramer of two MnmE and two MnmG subunits. It depends on FAD as a cofactor.

The protein resides in the cytoplasm. NAD-binding protein involved in the addition of a carboxymethylaminomethyl (cmnm) group at the wobble position (U34) of certain tRNAs, forming tRNA-cmnm(5)s(2)U34. This is tRNA uridine 5-carboxymethylaminomethyl modification enzyme MnmG from Lactococcus lactis subsp. cremoris (strain MG1363).